Reading from the N-terminus, the 677-residue chain is uncharacterized protein (677 aa).

The next 3 membrane-spanning stretches (helical) occupy residues 80-102 (ILSL…RASF), 338-360 (ALLS…LFGF), and 367-386 (LVAM…LLSL). The disordered stretch occupies residues 523–556 (DEAASLPSDSSPEEDLDPLEEVESIEGTAEESTR). Positions 533–546 (SPEEDLDPLEEVES) are enriched in acidic residues.

The protein resides in the cell membrane. This is an uncharacterized protein from Treponema pallidum (strain Nichols).